The sequence spans 317 residues: SWI/SNF-related matrix-associated actin-dependent regulator of chromatin subfamily E member 1-related (317 aa).

Over residues 1–22 (MSHGPKQPGAASAPASGKAPGQ) the composition is skewed to low complexity. A disordered region spans residues 1-71 (MSHGPKQPGA…RKKILPNGPK (71 aa)). Residue K31 forms a Glycyl lysine isopeptide (Lys-Gly) (interchain with G-Cter in SUMO2) linkage. The segment covering 31–52 (KQERGEGPRAGEKGSHEEEPVK) has biased composition (basic and acidic residues). The segment covering 53–65 (KRGWPKGKKRKKI) has biased composition (basic residues). Positions 70 to 138 (PKAPVTGYVR…QYMKELRAYQ (69 aa)) form a DNA-binding region, HMG box. S160 carries the post-translational modification Phosphoserine. Positions 190 to 257 (EEFLDQNKAR…LQQQLQAVRQ (68 aa)) form a coiled coil.

In terms of assembly, component of a BHC histone deacetylase complex that contains HDAC1, HDAC2, HMG20B/BRAF35, KDM1A, RCOR1/CoREST and PHF21A/BHC80. The BHC complex may also contain ZMYM2, ZNF217, ZMYM3, GSE1 and GTF2I. Interacts with the BRCA2 tumor suppressor protein.

It localises to the nucleus. The protein localises to the chromosome. Required for correct progression through G2 phase of the cell cycle and entry into mitosis. Required for RCOR1/CoREST mediated repression of neuronal specific gene promoters. The sequence is that of SWI/SNF-related matrix-associated actin-dependent regulator of chromatin subfamily E member 1-related (HMG20B) from Bos taurus (Bovine).